Here is a 305-residue protein sequence, read N- to C-terminus: Aquaporin-1 (305 aa).

A disordered region spans residues Met1 to Lys34. Over Met1 to His48 the chain is Cytoplasmic. A helical membrane pass occupies residues Phe49–Ile69. The Extracellular segment spans residues Cys70–Leu91. Residues Ile92–Val112 form a helical membrane-spanning segment. Residues Ser113 to Cys136 lie on the Cytoplasmic side of the membrane. Residues Asn118–Ala120 carry the NPA 1 motif. The helical transmembrane segment at Val137–Met157 threads the bilayer. Topologically, residues Thr158–Arg176 are extracellular. Residues Gly177–Val197 traverse the membrane as a helical segment. Topologically, residues Glu198–Asn203 are cytoplasmic. The chain crosses the membrane as a helical span at residues Phe204–Tyr224. Topologically, residues Thr225 to His248 are extracellular. The short motif at Asn230–Ala232 is the NPA 2 element. A helical membrane pass occupies residues Trp249–Leu269. Over Gln270 to Val305 the chain is Cytoplasmic. The span at Thr286 to Glu295 shows a compositional bias: basic and acidic residues. The tract at residues Thr286–Val305 is disordered. Positions Thr296 to Val305 are enriched in polar residues.

It belongs to the MIP/aquaporin (TC 1.A.8) family.

The protein localises to the endoplasmic reticulum membrane. It is found in the cell membrane. Water channel required to facilitate the transport of water across membranes. Involved in sporulation, freeze tolerance and osmotolerance. Is non-functional in most laboratory strains. This chain is Aquaporin-1 (AQY1), found in Saccharomyces cerevisiae (strain YJM789) (Baker's yeast).